The chain runs to 187 residues: Ribosome-recycling factor (187 aa).

The protein belongs to the RRF family.

The protein localises to the cytoplasm. In terms of biological role, responsible for the release of ribosomes from messenger RNA at the termination of protein biosynthesis. May increase the efficiency of translation by recycling ribosomes from one round of translation to another. The sequence is that of Ribosome-recycling factor from Parvibaculum lavamentivorans (strain DS-1 / DSM 13023 / NCIMB 13966).